The following is a 215-amino-acid chain: Translation initiation factor IF-3 (215 aa).

The segment at 159-215 (SAEVQQPPKREGRNMIMFLGPRKTPLQKDKPEQATKAERTLPIAKPPGKTAAPAAAN) is disordered. The span at 184-197 (LQKDKPEQATKAER) shows a compositional bias: basic and acidic residues. A compositionally biased stretch (low complexity) spans 200-215 (PIAKPPGKTAAPAAAN).

It belongs to the IF-3 family. Monomer.

Its subcellular location is the cytoplasm. Functionally, IF-3 binds to the 30S ribosomal subunit and shifts the equilibrium between 70S ribosomes and their 50S and 30S subunits in favor of the free subunits, thus enhancing the availability of 30S subunits on which protein synthesis initiation begins. The chain is Translation initiation factor IF-3 from Synechococcus sp. (strain RCC307).